Reading from the N-terminus, the 98-residue chain is NADH-ubiquinone oxidoreductase chain 4L (98 aa).

Transmembrane regions (helical) follow at residues 1–21, 26–46, and 59–79; these read MTPI…GLAF, LLSA…ALSL, and APML…ALMV.

This sequence belongs to the complex I subunit 4L family.

It localises to the mitochondrion membrane. It carries out the reaction a ubiquinone + NADH + 5 H(+)(in) = a ubiquinol + NAD(+) + 4 H(+)(out). Its function is as follows. Core subunit of the mitochondrial membrane respiratory chain NADH dehydrogenase (Complex I) which catalyzes electron transfer from NADH through the respiratory chain, using ubiquinone as an electron acceptor. Part of the enzyme membrane arm which is embedded in the lipid bilayer and involved in proton translocation. This is NADH-ubiquinone oxidoreductase chain 4L (MT-ND4L) from Tetraodon nigroviridis (Spotted green pufferfish).